The primary structure comprises 536 residues: Phosphoenolpyruvate carboxykinase (ATP) (536 aa).

Residues Arg62, Tyr203, and Lys209 each contribute to the substrate site. Residues Lys209, His228, and 244 to 252 (GLSGTGKTT) contribute to the ATP site. Mn(2+) is bound by residues Lys209 and His228. Asp265 is a Mn(2+) binding site. ATP-binding positions include Glu293, Arg329, 445–446 (RI), and Thr451. Arg329 is a substrate binding site.

The protein belongs to the phosphoenolpyruvate carboxykinase (ATP) family. In terms of assembly, monomer. The cofactor is Mn(2+).

It is found in the cytoplasm. The enzyme catalyses oxaloacetate + ATP = phosphoenolpyruvate + ADP + CO2. It functions in the pathway carbohydrate biosynthesis; gluconeogenesis. Its function is as follows. Involved in the gluconeogenesis. Catalyzes the conversion of oxaloacetate (OAA) to phosphoenolpyruvate (PEP) through direct phosphoryl transfer between the nucleoside triphosphate and OAA. In Actinobacillus pleuropneumoniae serotype 7 (strain AP76), this protein is Phosphoenolpyruvate carboxykinase (ATP).